The following is a 302-amino-acid chain: Taste receptor type 2 member 104 (302 aa).

Topologically, residues 1–7 are extracellular; it reads MLSALES. The helical transmembrane segment at 8 to 28 threads the bilayer; it reads ILLSVATSEAMLGVLGNTFIV. Residues 29–43 are Cytoplasmic-facing; the sequence is LVNYTDWVRNKKLSK. A helical membrane pass occupies residues 44–64; sequence INFILTGLAISRIFTIWIITL. Residues 65–87 are Extracellular-facing; sequence DAYTKVFLLTMLMPSSLHECMSY. A helical membrane pass occupies residues 88 to 108; it reads IWVIINHLSVWFSTSLGIFYF. Residues 109–128 are Cytoplasmic-facing; that stretch reads LKIANFSHYIFLWMKRRADK. A helical transmembrane segment spans residues 129–149; it reads VFVFLIVFLIITWLASFPLAV. Over 150–182 the chain is Extracellular; sequence KVIKDVKIYQSNTSWLIHLEKSELLINYVFANM. N161 is a glycosylation site (N-linked (GlcNAc...) asparagine). Residues 183–203 form a helical membrane-spanning segment; that stretch reads GPISLFIVAIIACFLLTISLW. Over 204-229 the chain is Cytoplasmic; that stretch reads RHSRQMQSIGSGFRDLNTEAHMKAMK. Residues 230–250 form a helical membrane-spanning segment; the sequence is VLIAFIILFILYFLGILIETL. The Extracellular segment spans residues 251 to 259; it reads CLFLTNNKL. Residues 260–280 traverse the membrane as a helical segment; that stretch reads LFIFGFTLSAMYPCCHSFILI. At 281–302 the chain is on the cytoplasmic side; it reads LTSRELKQATMRALQRLKCCET.

It belongs to the G-protein coupled receptor T2R family.

The protein resides in the membrane. Its function is as follows. Putative taste receptor which may play a role in the perception of bitterness. In Mus musculus (Mouse), this protein is Taste receptor type 2 member 104.